The primary structure comprises 133 residues: Succinate dehydrogenase assembly factor 3, mitochondrial (133 aa).

Residues 1–12 (MNNKLIYRSVRF) constitute a mitochondrion transit peptide.

The protein belongs to the complex I LYR family. SDHAF3 subfamily. As to quaternary structure, interacts with SDH2 within an SDH1-SDH2 subcomplex.

It is found in the mitochondrion. The protein resides in the mitochondrion intermembrane space. It localises to the mitochondrion matrix. Its function is as follows. Plays an essential role in the assembly of succinate dehydrogenase (SDH), an enzyme complex (also referred to as respiratory complex II) that is a component of both the tricarboxylic acid (TCA) cycle and the mitochondrial electron transport chain, and which couples the oxidation of succinate to fumarate with the reduction of ubiquinone (coenzyme Q) to ubiquinol. Promotes maturation of the iron-sulfur protein subunit SDH2 of the SDH catalytic dimer, protecting it from the deleterious effects of oxidants. Acts together with SDHAF1 (SDH6). This Saccharomyces cerevisiae (strain ATCC 204508 / S288c) (Baker's yeast) protein is Succinate dehydrogenase assembly factor 3, mitochondrial.